The chain runs to 56 residues: uncharacterized protein (56 aa).

4Fe-4S ferredoxin-type domains lie at 2–28 and 29–56; these read VKIDYKKCGYCGACVGVCEKLAINLIE and HIIVIDEKKCNNCKLCTIVCPLNALEGE. The [4Fe-4S] cluster site is built by Cys9, Cys12, Cys15, Cys19, Cys38, Cys41, Cys44, and Cys48.

The cofactor is [4Fe-4S] cluster.

In terms of biological role, ferredoxins are iron-sulfur proteins that transfer electrons in a wide variety of metabolic reactions. This is an uncharacterized protein from Methanocaldococcus jannaschii (strain ATCC 43067 / DSM 2661 / JAL-1 / JCM 10045 / NBRC 100440) (Methanococcus jannaschii).